We begin with the raw amino-acid sequence, 344 residues long: Methionine import ATP-binding protein MetN (344 aa).

The region spanning 2 to 241 (IELQGLSQRF…PQHEVTRAMI (240 aa)) is the ABC transporter domain. 38–45 (GRSGAGKS) contributes to the ATP binding site.

Belongs to the ABC transporter superfamily. Methionine importer (TC 3.A.1.24) family. In terms of assembly, the complex is composed of two ATP-binding proteins (MetN), two transmembrane proteins (MetI) and a solute-binding protein (MetQ).

It localises to the cell inner membrane. The enzyme catalyses L-methionine(out) + ATP + H2O = L-methionine(in) + ADP + phosphate + H(+). The catalysed reaction is D-methionine(out) + ATP + H2O = D-methionine(in) + ADP + phosphate + H(+). Part of the ABC transporter complex MetNIQ involved in methionine import. Responsible for energy coupling to the transport system. This chain is Methionine import ATP-binding protein MetN, found in Cupriavidus metallidurans (strain ATCC 43123 / DSM 2839 / NBRC 102507 / CH34) (Ralstonia metallidurans).